The chain runs to 207 residues: ATP synthase subunit b 2 (207 aa).

A helical membrane pass occupies residues 58-78 (LLWLVITFGVFYLLMQKVIAP).

This sequence belongs to the ATPase B chain family. As to quaternary structure, F-type ATPases have 2 components, F(1) - the catalytic core - and F(0) - the membrane proton channel. F(1) has five subunits: alpha(3), beta(3), gamma(1), delta(1), epsilon(1). F(0) has three main subunits: a(1), b(2) and c(10-14). The alpha and beta chains form an alternating ring which encloses part of the gamma chain. F(1) is attached to F(0) by a central stalk formed by the gamma and epsilon chains, while a peripheral stalk is formed by the delta and b chains.

The protein localises to the cell inner membrane. F(1)F(0) ATP synthase produces ATP from ADP in the presence of a proton or sodium gradient. F-type ATPases consist of two structural domains, F(1) containing the extramembraneous catalytic core and F(0) containing the membrane proton channel, linked together by a central stalk and a peripheral stalk. During catalysis, ATP synthesis in the catalytic domain of F(1) is coupled via a rotary mechanism of the central stalk subunits to proton translocation. In terms of biological role, component of the F(0) channel, it forms part of the peripheral stalk, linking F(1) to F(0). The b'-subunit is a diverged and duplicated form of b found in plants and photosynthetic bacteria. This chain is ATP synthase subunit b 2 (atpF2), found in Rhizobium johnstonii (strain DSM 114642 / LMG 32736 / 3841) (Rhizobium leguminosarum bv. viciae).